Reading from the N-terminus, the 658-residue chain is UvrABC system protein B (658 aa).

Residues 25–416 (KSLKNNNHYQ…QKNVAEQIIR (392 aa)) form the Helicase ATP-binding domain. 38–45 (GVTGSGKT) is an ATP binding site. The short motif at 91-114 (HFDYYQPESYIPRRDLFIEKDSSI) is the Beta-hairpin element. One can recognise a Helicase C-terminal domain in the interval 433–607 (QVQDLFDEIK…ELKLRDDEIK (175 aa)). A UVR domain is found at 623–658 (EKIIKELDKKMRERAKNLDFEEAMRLRDEIAQLRTL).

The protein belongs to the UvrB family. As to quaternary structure, forms a heterotetramer with UvrA during the search for lesions. Interacts with UvrC in an incision complex.

It is found in the cytoplasm. In terms of biological role, the UvrABC repair system catalyzes the recognition and processing of DNA lesions. A damage recognition complex composed of 2 UvrA and 2 UvrB subunits scans DNA for abnormalities. Upon binding of the UvrA(2)B(2) complex to a putative damaged site, the DNA wraps around one UvrB monomer. DNA wrap is dependent on ATP binding by UvrB and probably causes local melting of the DNA helix, facilitating insertion of UvrB beta-hairpin between the DNA strands. Then UvrB probes one DNA strand for the presence of a lesion. If a lesion is found the UvrA subunits dissociate and the UvrB-DNA preincision complex is formed. This complex is subsequently bound by UvrC and the second UvrB is released. If no lesion is found, the DNA wraps around the other UvrB subunit that will check the other stand for damage. The chain is UvrABC system protein B from Helicobacter pylori (strain J99 / ATCC 700824) (Campylobacter pylori J99).